Reading from the N-terminus, the 564-residue chain is Kelch repeat and BTB domain-containing protein 1 (564 aa).

The BTB domain occupies 21-88 (CDINIVINDE…IYGIPLSLTN (68 aa)). The BACK domain occupies 123–219 (CIDFYIYADK…SLLSPQVIKS (97 aa)). 6 Kelch repeats span residues 252 to 297 (IELI…VLDN), 298 to 346 (IIYM…ADDE), 347 to 395 (YIYC…MLNG), 397 to 441 (IYVI…VHDG), 442 to 492 (KIYI…SAHN), and 494 to 539 (LYVG…CEPI).

Interacts (via BTB domain) with host CUL3.

The protein localises to the host cytoplasm. In terms of biological role, probable substrate-specific adapter of CUL3-containing E3 ubiquitin-protein ligases which mediate the ubiquitination and subsequent proteasomal degradation of host target proteins. The protein is Kelch repeat and BTB domain-containing protein 1 (KBTB1) of Cowpox virus (strain GRI-90 / Grishak) (CPV).